Reading from the N-terminus, the 453-residue chain is MDFVSLVNTVNSFVWGPYMLVLLLGTGIFLTLRLGFMQIHTLPYALKLAFSKHQDETSEGDISHFQALMTALAATIGTGNIAGVATAYVLGGPGAIFWMWVTAFFGMATKYAEAVLAIKYRTVDDNGEMAGGPMYFLEKGLPDHGLGKILGVAFAFFGAFAAFGIGNMVQTNSVADAVASNFGVDPLITGFVLAIFTAAVILGGIKSIGKATGIIVPFMAVFYILAGLVILAMNIGYIIPAFGTIFSSAFNFSAGFGALIGTAIMWGVKRGVFSNEAGLGSAPIAAAAAKTDHPGRQALVSMTGTFLDTIVVCTITGLVLTIAGLKAFPGLTDLTGASLTAASFDALMPMGGLIVTIGLVFFAYSTVLGWSYYGEKCFEYLIGTKGIRLYRIAFVLVAFWGATASLPLVWNIADTLNGAMAIPNLIGLLLLSGVVVSETKAFNEIRKNEAKNA.

The Extracellular segment spans residues 1-17; the sequence is MDFVSLVNTVNSFVWGP. Residues 18–32 form a helical membrane-spanning segment; it reads YMLVLLLGTGIFLTL. Residues 33 to 67 lie on the Cytoplasmic side of the membrane; it reads RLGFMQIHTLPYALKLAFSKHQDETSEGDISHFQA. The chain crosses the membrane as a helical span at residues 68–89; the sequence is LMTALAATIGTGNIAGVATAYV. T75 is a D-alanine binding site. The L-alanine site is built by T75 and G79. D-alanine is bound at residue N80. Over 90 to 92 the chain is Extracellular; that stretch reads LGG. Residues 93–111 traverse the membrane as a helical segment; sequence PGAIFWMWVTAFFGMATKY. Residues 112–148 lie on the Cytoplasmic side of the membrane; it reads AEAVLAIKYRTVDDNGEMAGGPMYFLEKGLPDHGLGK. A helical membrane pass occupies residues 149–179; that stretch reads ILGVAFAFFGAFAAFGIGNMVQTNSVADAVA. Residue Q170 participates in D-alanine binding. Q170 is a binding site for L-alanine. Topologically, residues 180 to 186 are extracellular; sequence SNFGVDP. A helical membrane pass occupies residues 187–202; sequence LITGFVLAIFTAAVIL. Over 203 to 206 the chain is Cytoplasmic; it reads GGIK. Residues 207 to 233 form a helical membrane-spanning segment; sequence SIGKATGIIVPFMAVFYILAGLVILAM. At 234-258 the chain is on the extracellular side; the sequence is NIGYIIPAFGTIFSSAFNFSAGFGA. Residues 259-274 form a helical membrane-spanning segment; sequence LIGTAIMWGVKRGVFS. Residue 273 to 274 coordinates D-alanine; it reads FS. Residue 273–276 participates in L-alanine binding; sequence FSNE. Residues 275–300 are Cytoplasmic-facing; it reads NEAGLGSAPIAAAAAKTDHPGRQALV. A helical membrane pass occupies residues 301 to 322; sequence SMTGTFLDTIVVCTITGLVLTI. Residues 323–350 lie on the Extracellular side of the membrane; sequence AGLKAFPGLTDLTGASLTAASFDALMPM. A helical membrane pass occupies residues 351–378; the sequence is GGLIVTIGLVFFAYSTVLGWSYYGEKCF. Residues 379–386 lie on the Cytoplasmic side of the membrane; the sequence is EYLIGTKG. The helical transmembrane segment at 387–403 threads the bilayer; it reads IRLYRIAFVLVAFWGAT. Topologically, residues 404–408 are extracellular; it reads ASLPL. A helical membrane pass occupies residues 409–430; sequence VWNIADTLNGAMAIPNLIGLLL. Residues 431–453 lie on the Cytoplasmic side of the membrane; sequence LSGVVVSETKAFNEIRKNEAKNA.

This sequence belongs to the alanine or glycine:cation symporter (AGCS) (TC 2.A.25) family.

It is found in the cell membrane. It carries out the reaction D-alanine(in) + Na(+)(in) = D-alanine(out) + Na(+)(out). It catalyses the reaction L-alanine(in) + Na(+)(in) = L-alanine(out) + Na(+)(out). The catalysed reaction is glycine(in) + Na(+)(in) = glycine(out) + Na(+)(out). In terms of biological role, catalyzes the sodium-dependent uptake of extracellular D-alanine and L-alanine. Can also transport glycine. Binds glycine and both enantiomers of alanine, while strictly excluding other amino acids. The sequence is that of Sodium/alanine symporter AgcS from Methanococcus maripaludis (strain DSM 14266 / JCM 13030 / NBRC 101832 / S2 / LL).